Here is an 82-residue protein sequence, read N- to C-terminus: Colonization factor (82 aa).

Residues 1 to 33 (MFSSLKNKLNTFKSTLSLGVFLLFSAFANQALA) form the signal peptide.

It is found in the secreted. This is Colonization factor (cep) from Vibrio cholerae serotype O1 (strain ATCC 39315 / El Tor Inaba N16961).